Reading from the N-terminus, the 1849-residue chain is Immunoglobulin A1 protease autotransporter (1849 aa).

The N-terminal stretch at 1 to 25 is a signal peptide; the sequence is MLNKKFKLNFIALTVAYALTPYTEA. The region spanning 26–343 is the Peptidase S6 domain; that stretch reads ALVRDDVDYQ…NIYKHEFAEK (318 aa). The active site involves S299. The tract at residues 998-1538 is disordered; it reads VEKRNQTVDT…EPVELPTENA (541 aa). Over residues 1004-1015 the composition is skewed to polar residues; the sequence is TVDTTNITTPND. Over residues 1066–1077 the composition is skewed to low complexity; it reads EETNTANSTETA. Polar residues-rich tracts occupy residues 1079-1097 and 1138-1151; these read KSDTATQTENPNSESVPSE and VEANTQTNEATQSE. Positions 1152–1166 are enriched in basic and acidic residues; that stretch reads GKTEETQTAETKSEP. Polar residues predominate over residues 1167–1184; that stretch reads TESVTVSENQPEKTVSQS. The span at 1185–1205 shows a compositional bias: basic and acidic residues; the sequence is TEDKVVVEKEEKAKVETEETQ. A compositionally biased stretch (polar residues) spans 1237-1268; that stretch reads ALQQTQPTTVAAAETTSPNSKPAEETQQPSEK. The span at 1291–1301 shows a compositional bias: basic and acidic residues; that stretch reads ETAKVEKEKTQ. 3 stretches are compositionally biased toward low complexity: residues 1314 to 1330, 1345 to 1361, and 1369 to 1381; these read QEQPAAKPQAQTKPQAE, PQPQAQPQTQSTAVPTT, and KPAAKPQAQAKPQ. The segment covering 1388–1437 has biased composition (polar residues); the sequence is NVSTVNTKEPQSQTSATVSTEQPAKETSSNVEQPAPENSINTGSATTMTE. Residues 1438-1457 are compositionally biased toward basic and acidic residues; the sequence is TAEKSDKPQMETVTENDRQP. Residues 1493-1513 are compositionally biased toward low complexity; sequence EETTVASTQETTVDNSVSTPK. Positions 1597-1849 constitute an Autotransporter domain; sequence NNEGQYNVWI…TAEVKLSFSF (253 aa).

It is found in the periplasm. The protein resides in the secreted. Its subcellular location is the cell surface. It localises to the cell outer membrane. It carries out the reaction Cleavage of immunoglobulin A molecules at certain Pro-|-Xaa bonds in the hinge region. No small molecule substrates are known.. Its function is as follows. Virulence factor; cleaves host immunoglobulin A producing intact Fc and Fab fragments. The sequence is that of Immunoglobulin A1 protease autotransporter (iga) from Haemophilus influenzae.